A 299-amino-acid polypeptide reads, in one-letter code: Very long chain fatty acid elongase 5 (299 aa).

Met1 bears the N-acetylmethionine mark. A run of 7 helical transmembrane segments spans residues 26–46, 64–84, 112–132, 150–170, 172–192, 205–225, and 226–246; these read WFLL…LLIV, ILVV…CELV, VLWW…FFIL, MLNI…YFGA, LNSF…VLSM, GQLL…IWPC, and TFPL…IALF. Residues 262-299 are disordered; sequence RKDHLKDHQNGSKAAVNGHTNSFSPLENNVKPRKLRKD. Residues 279–288 show a composition bias toward polar residues; sequence GHTNSFSPLE. A Phosphoserine modification is found at Ser285.

Belongs to the ELO family. ELOVL5 subfamily. As to quaternary structure, interacts with TECR.

It localises to the endoplasmic reticulum membrane. Its subcellular location is the cell projection. It is found in the dendrite. The enzyme catalyses a very-long-chain acyl-CoA + malonyl-CoA + H(+) = a very-long-chain 3-oxoacyl-CoA + CO2 + CoA. The catalysed reaction is (6Z,9Z,12Z)-octadecatrienoyl-CoA + malonyl-CoA + H(+) = (8Z,11Z,14Z)-3-oxoeicosatrienoyl-CoA + CO2 + CoA. It catalyses the reaction (9Z,12Z,15Z)-octadecatrienoyl-CoA + malonyl-CoA + H(+) = (11Z,14Z,17Z)-3-oxoeicosatrienoyl-CoA + CO2 + CoA. It carries out the reaction (9Z)-hexadecenoyl-CoA + malonyl-CoA + H(+) = 3-oxo-(11Z)-octadecenoyl-CoA + CO2 + CoA. The enzyme catalyses (9Z)-octadecenoyl-CoA + malonyl-CoA + H(+) = 3-oxo-(11Z)-eicosenoyl-CoA + CO2 + CoA. The catalysed reaction is (11Z)-octadecenoyl-CoA + malonyl-CoA + H(+) = 3-oxo-(13Z)-eicosenoyl-CoA + CO2 + CoA. It catalyses the reaction (9Z,12Z)-octadecadienoyl-CoA + malonyl-CoA + H(+) = (11Z,14Z)-3-oxoicosa-11,14-dienoyl-CoA + CO2 + CoA. It carries out the reaction (6Z,9Z,12Z,15Z)-octadecatetraenoyl-CoA + malonyl-CoA + H(+) = (8Z,11Z,14Z,17Z)-3-oxoicosatetraenoyl-CoA + CO2 + CoA. The enzyme catalyses (5Z,8Z,11Z,14Z)-eicosatetraenoyl-CoA + malonyl-CoA + H(+) = (7Z,10Z,13Z,16Z)-3-oxodocosatetraenoyl-CoA + CO2 + CoA. The catalysed reaction is (5Z,8Z,11Z,14Z,17Z)-eicosapentaenoyl-CoA + malonyl-CoA + H(+) = 3-oxo-(7Z,10Z,13Z,16Z,19Z)-docosapentaenoyl-CoA + CO2 + CoA. The protein operates within lipid metabolism; polyunsaturated fatty acid biosynthesis. Its function is as follows. Catalyzes the first and rate-limiting reaction of the four reactions that constitute the long-chain fatty acids elongation cycle. This endoplasmic reticulum-bound enzymatic process allows the addition of 2 carbons to the chain of long- and very long-chain fatty acids (VLCFAs) per cycle. Condensing enzyme that acts specifically toward polyunsaturated acyl-CoA with the higher activity toward C18:3(n-6) acyl-CoA. May participate in the production of monounsaturated and of polyunsaturated VLCFAs of different chain lengths that are involved in multiple biological processes as precursors of membrane lipids and lipid mediators. In conditions where the essential linoleic and alpha linoleic fatty acids are lacking it is also involved in the synthesis of Mead acid from oleic acid. The polypeptide is Very long chain fatty acid elongase 5 (Pongo abelii (Sumatran orangutan)).